The following is a 203-amino-acid chain: E3 ubiquitin-protein ligase RNF152 (203 aa).

Residues 12 to 55 (CQICFNYYSPRRRPKLLDCKHTCCSVCLQQMRTSQKDVRCPWCR) form an RING-type zinc finger. The segment at 106-165 (ISKERTLLPGDMGCRLLPGSQQKSLTVVTIPAEQQPLQGGAPQEAVEEEPDRRGVAKSST) is necessary for interaction with RRAGA. Residues 140 to 159 (QPLQGGAPQEAVEEEPDRRG) form a disordered region. Residues 167–187 (SGVCTVILVACVLVFLLGIVL) form a helical membrane-spanning segment.

This sequence belongs to the RNF152 family. Interacts with RRAGA (inactive GDP-bound form); stimulated by amino acid starvation. Interacts with SEC16A. Post-translationally, ubiquitinated. Autoubiquitinated in vitro, leading to its degradation by the proteasome.

It is found in the lysosome membrane. It carries out the reaction S-ubiquitinyl-[E2 ubiquitin-conjugating enzyme]-L-cysteine + [acceptor protein]-L-lysine = [E2 ubiquitin-conjugating enzyme]-L-cysteine + N(6)-ubiquitinyl-[acceptor protein]-L-lysine.. Its pathway is protein modification; protein ubiquitination. E3 ubiquitin-protein ligase that acts as a negative regulator of mTORC1 signaling by mediating ubiquitination of RagA/RRAGA and RHEB. Catalyzes 'Lys-63'-linked polyubiquitination of RagA/RRAGA in response to amino acid starvation, thereby regulating mTORC1 signaling. Also mediates monoubiquitination of RHEB, promoting its association with the TSC-TBC complex and subsequent inhibition. Also mediates 'Lys-48'-linked polyubiquitination of target proteins and their subsequent targeting to the proteasome for degradation. Induces apoptosis when overexpressed. The chain is E3 ubiquitin-protein ligase RNF152 from Rattus norvegicus (Rat).